The primary structure comprises 391 residues: Phosphoglycerate kinase (391 aa).

Residues 21-23 (DLN), Arg36, 59-62 (HLGR), Arg113, and Arg146 each bind substrate. Residues Lys197, Glu319, and 345-348 (GGDT) contribute to the ATP site.

Belongs to the phosphoglycerate kinase family. In terms of assembly, monomer.

It localises to the cytoplasm. The catalysed reaction is (2R)-3-phosphoglycerate + ATP = (2R)-3-phospho-glyceroyl phosphate + ADP. The protein operates within carbohydrate degradation; glycolysis; pyruvate from D-glyceraldehyde 3-phosphate: step 2/5. The sequence is that of Phosphoglycerate kinase from Xanthomonas campestris pv. campestris (strain 8004).